A 102-amino-acid polypeptide reads, in one-letter code: Small ribosomal subunit protein uS10 (102 aa).

The protein belongs to the universal ribosomal protein uS10 family. As to quaternary structure, part of the 30S ribosomal subunit.

In terms of biological role, involved in the binding of tRNA to the ribosomes. The polypeptide is Small ribosomal subunit protein uS10 (Bifidobacterium longum (strain DJO10A)).